A 984-amino-acid polypeptide reads, in one-letter code: Probable beta-galactosidase C (984 aa).

The N-terminal stretch at 1–23 (MRLLSFIYLVWLALLTGTPQVSA) is a signal peptide. Substrate is bound by residues tyrosine 82, asparagine 127, alanine 128, glutamate 129, and asparagine 187. The active-site Proton donor is the glutamate 188. Residue asparagine 197 is glycosylated (N-linked (GlcNAc...) asparagine). A substrate-binding site is contributed by tyrosine 251. Cysteine 257 and cysteine 304 are joined by a disulfide. Residue asparagine 276 is glycosylated (N-linked (GlcNAc...) asparagine). Glutamate 287 functions as the Nucleophile in the catalytic mechanism. Substrate is bound at residue tyrosine 353. 10 N-linked (GlcNAc...) asparagine glycosylation sites follow: asparagine 391, asparagine 421, asparagine 434, asparagine 517, asparagine 602, asparagine 677, asparagine 715, asparagine 720, asparagine 759, and asparagine 805.

This sequence belongs to the glycosyl hydrolase 35 family.

Its subcellular location is the secreted. The enzyme catalyses Hydrolysis of terminal non-reducing beta-D-galactose residues in beta-D-galactosides.. Functionally, cleaves beta-linked terminal galactosyl residues from gangliosides, glycoproteins, and glycosaminoglycans. This is Probable beta-galactosidase C (lacC) from Aspergillus oryzae (strain ATCC 42149 / RIB 40) (Yellow koji mold).